A 106-amino-acid polypeptide reads, in one-letter code: Large ribosomal subunit protein bL21 (106 aa).

It belongs to the bacterial ribosomal protein bL21 family. As to quaternary structure, part of the 50S ribosomal subunit. Contacts protein L20.

Functionally, this protein binds to 23S rRNA in the presence of protein L20. This is Large ribosomal subunit protein bL21 from Chlamydia pneumoniae (Chlamydophila pneumoniae).